The primary structure comprises 338 residues: MDAISDPTFKHARSRKQVTEESPSLLTVIIEIAPKLWTTFDEEGNEKGSIIKVLEALIVFLNAHLAFNSANKVAVIAAYSQGIKYLYPESTSALKASESENKTRSDLKIINSDMYRRFRNVDETLVEEIYKLFELEKKQIEQNSQRSTLAGAMSAGLTYVNRISKESVTTSLKSRLLVLTCGSGSSKDEIFQYIPIMNCIFSATKMKCPIDVVKIGGSKESTFLQQTTDATNGVYLHVESTEGLIQYLATAMFIDPSLRPIIVKPNHGSVDFRTSCYLTGRVVAVGFICSVCLCVLSIIPPGNKCPACDSQFDEHVIAKLKRKPVVPRLKAKKKVTKP.

Met-1 is modified (N-acetylmethionine). Residues 289 to 308 (CSVCLCVLSIIPPGNKCPAC) form a C4-type zinc finger.

Belongs to the TFB4 family. In terms of assembly, component of the 7-subunit TFIIH core complex composed of XPB/SSL2, XPD/RAD3, SSL1, TFB1, TFB2, TFB4 and TFB5, which is active in NER. The core complex associates with the 3-subunit CTD-kinase module TFIIK composed of CCL1, KIN28 and TFB3 to form the 10-subunit holoenzyme (holo-TFIIH) active in transcription. An additionnal subunit, TFB6, plays a role in the dissociation of the SSL2 helicase from TFIIH after transcription initiation.

The protein localises to the nucleus. Functionally, component of the general transcription and DNA repair factor IIH (TFIIH) core complex, which is involved in general and transcription-coupled nucleotide excision repair (NER) of damaged DNA and, when complexed to TFIIK, in RNA transcription by RNA polymerase II. In NER, TFIIH acts by opening DNA around the lesion to allow the excision of the damaged oligonucleotide and its replacement by a new DNA fragment. In transcription, TFIIH has an essential role in transcription initiation. When the pre-initiation complex (PIC) has been established, TFIIH is required for promoter opening and promoter escape. Phosphorylation of the C-terminal tail (CTD) of the largest subunit of RNA polymerase II by the kinase module TFIIK controls the initiation of transcription. The protein is General transcription and DNA repair factor IIH subunit TFB4 (TFB4) of Saccharomyces cerevisiae (strain ATCC 204508 / S288c) (Baker's yeast).